Consider the following 403-residue polypeptide: Probable tRNA sulfurtransferase (403 aa).

The region spanning 60–165 (QLAEERLKPI…KEGVFLSCRT (106 aa)) is the THUMP domain. ATP contacts are provided by residues 183–184 (ML), 208–209 (HF), arginine 265, glycine 287, and glutamine 296.

This sequence belongs to the ThiI family.

Its subcellular location is the cytoplasm. The enzyme catalyses [ThiI sulfur-carrier protein]-S-sulfanyl-L-cysteine + a uridine in tRNA + 2 reduced [2Fe-2S]-[ferredoxin] + ATP + H(+) = [ThiI sulfur-carrier protein]-L-cysteine + a 4-thiouridine in tRNA + 2 oxidized [2Fe-2S]-[ferredoxin] + AMP + diphosphate. It carries out the reaction [ThiS sulfur-carrier protein]-C-terminal Gly-Gly-AMP + S-sulfanyl-L-cysteinyl-[cysteine desulfurase] + AH2 = [ThiS sulfur-carrier protein]-C-terminal-Gly-aminoethanethioate + L-cysteinyl-[cysteine desulfurase] + A + AMP + 2 H(+). It functions in the pathway cofactor biosynthesis; thiamine diphosphate biosynthesis. In terms of biological role, catalyzes the ATP-dependent transfer of a sulfur to tRNA to produce 4-thiouridine in position 8 of tRNAs, which functions as a near-UV photosensor. Also catalyzes the transfer of sulfur to the sulfur carrier protein ThiS, forming ThiS-thiocarboxylate. This is a step in the synthesis of thiazole, in the thiamine biosynthesis pathway. The sulfur is donated as persulfide by IscS. This Listeria monocytogenes serovar 1/2a (strain ATCC BAA-679 / EGD-e) protein is Probable tRNA sulfurtransferase.